Consider the following 347-residue polypeptide: Ryncolin-3 (347 aa).

Positions 1-19 (MKPWAAFHLIFLVASSVEG) are cleaved as a signal peptide. Residues 57-114 (GIPGVPGINGSEGLKGDPGPQGLPGETGFDGIPGVAGPKGDKGDQGDKGDKGDKGDKG) enclose the Collagen-like domain. Positions 62-115 (PGINGSEGLKGDPGPQGLPGETGFDGIPGVAGPKGDKGDQGDKGDKGDKGDKGD) are disordered. The span at 95-115 (KGDKGDQGDKGDKGDKGDKGD) shows a compositional bias: basic and acidic residues. The 221-residue stretch at 121 to 341 (DCPPTDVEVR…YADMKIRPQQ (221 aa)) folds into the Fibrinogen C-terminal domain. 2 disulfide bridges follow: C132–C160 and C284–C297.

This sequence belongs to the ficolin lectin family. Veficolin subfamily. In terms of processing, hydroxylated. Expressed by the venom duct.

It is found in the secreted. In terms of biological role, initiates complement activation and/or interferes in platelet aggregation and/or blood coagulation. The polypeptide is Ryncolin-3 (Cerberus rynchops (Dog-faced water snake)).